A 519-amino-acid polypeptide reads, in one-letter code: Ubiquitin carboxyl-terminal hydrolase 30 (519 aa).

Residues 1 to 52 (MSWAPVSTWSRRTPLAACCSAPELPPAGAWKACAAGSLRIGPQGRCKMMKNW) lie on the Mitochondrial intermembrane side of the membrane. Residues 53 to 73 (GMIGGIAAALAAGIYVLWGPI) form a helical membrane-spanning segment. The Cytoplasmic portion of the chain corresponds to 74 to 519 (SDRKKYRKGL…HPEDQRAAEK (446 aa)). The region spanning 85–504 (PGLLNLGNTC…SAYLLFYERI (420 aa)) is the USP domain. Cys94 acts as the Nucleophile in catalysis. The tract at residues 379–405 (SKQPANHLSAAEQETTDGKEGGAQNPT) is disordered. His455 serves as the catalytic Proton acceptor.

Belongs to the peptidase C19 family.

It localises to the mitochondrion outer membrane. It catalyses the reaction Thiol-dependent hydrolysis of ester, thioester, amide, peptide and isopeptide bonds formed by the C-terminal Gly of ubiquitin (a 76-residue protein attached to proteins as an intracellular targeting signal).. In terms of biological role, deubiquitinating enzyme that acts as a key inhibitor of mitophagy by counteracting the action of parkin (PRKN). The protein is Ubiquitin carboxyl-terminal hydrolase 30 (usp30) of Xenopus tropicalis (Western clawed frog).